We begin with the raw amino-acid sequence, 260 residues long: Magnesium dechelatase SGRL, chloroplastic (260 aa).

The N-terminal 45 residues, 1-45, are a transit peptide targeting the chloroplast; that stretch reads MACYIVPYYHHPVLSHPNREIFSHRHHHHHRFCNNLLNRRISVPR.

Belongs to the staygreen family. In terms of assembly, interacts with the light harvesting complex II (LHCII). Interacts with the chlorophyll catabolic enzymes (CCEs) NYC1, NOL, PAO and RCCR. As to expression, expressed in cotyledons, pollen and young leaves.

The protein localises to the plastid. It is found in the chloroplast thylakoid. The catalysed reaction is chlorophyllide a + 2 H(+) = pheophorbide a + Mg(2+). Its function is as follows. Magnesium chelatase involved in chlorophyll a degradation in the chlorophyll-protein complexes of photosystem I (PSI) and photosystem II (PSII). Contributes to the degradation of PSI and PSII in the thylakoid membranes. Recombinant SGRL possesses high dechelating activity against chlorophyllide a, very low activity against chlorophyll a, and no activity against chlorophyll b. Contributes to abiotic stress-induced chlorophyll degradation and leaf yellowing during vegetative plant growth. This chain is Magnesium dechelatase SGRL, chloroplastic, found in Arabidopsis thaliana (Mouse-ear cress).